We begin with the raw amino-acid sequence, 476 residues long: MKDTFVEKVDDFVRQHDVLKERSTIVVGVSGGPDSLALLYYLLEKRAAKQFEIVVAHVDHMFRGDESHEDLQFVQDLCKGLGVICETIRINVSQYQKQYGMNAQVAARECRYAFLERIMKKYDARYVALGHHGDDQVETILMRLVRGSTPKGYAGIAVKRPFHNGYLIRPLLGVTKEEIVNYCNELKIIPRIDPSNKKEVYTRNRLRKYVLPHLKEENPQVHEKFQKFSMQMQEDEAYLQELAFEKMNKVITKKSDKQISLSIPTFESMSMPLQRRGIQLILNYLYEYKIPSSLSSIHIDKVIEFFKRTQPSGSLDFPGDLKIVRAYEECSFGFKQEIVSPFLQDLSVPGTITLSNGDKLVTEVSEDIPSDMNETVFVAKYNDISYPIRIRSRENGDRMSIQGMNGTKKIKAIFIEAKVPREKREEWPVVCDASGNIIWLPLLKRSAFAISKETAKKDKYMIIHYKSKESSGRIMK.

An ATP-binding site is contributed by 30 to 35 (SGGPDS).

Belongs to the tRNA(Ile)-lysidine synthase family.

It localises to the cytoplasm. It carries out the reaction cytidine(34) in tRNA(Ile2) + L-lysine + ATP = lysidine(34) in tRNA(Ile2) + AMP + diphosphate + H(+). In terms of biological role, ligates lysine onto the cytidine present at position 34 of the AUA codon-specific tRNA(Ile) that contains the anticodon CAU, in an ATP-dependent manner. Cytidine is converted to lysidine, thus changing the amino acid specificity of the tRNA from methionine to isoleucine. This Bacillus anthracis protein is tRNA(Ile)-lysidine synthase.